A 127-amino-acid chain; its full sequence is MSLLRNRLQDLPALCLCVLVLACIGACQSEAHEETPSPPPKLKMSHWSLVTGRMKELLEPVVNRTRDRWQWFWSPSTFRGFMQTYYDDHLRDLGPRTKAWLLKSKDSLLNKTHSLCPRIVCGDKDQG.

Residues 1–27 (MSLLRNRLQDLPALCLCVLVLACIGAC) form the signal peptide. N-linked (GlcNAc...) asparagine glycosylation is present at N63.

Belongs to the apolipoprotein C4 family.

The protein localises to the secreted. Functionally, may participate in lipoprotein metabolism. This is Apolipoprotein C-IV (APOC4) from Colobus guereza (Mantled guereza).